The primary structure comprises 445 residues: MDIRQVTETIAMIEEQNFDIRTITMGISLLDCIDTDIDWAAEKIYKKITTKAKDLVAVGDEIAAELGIPIVNKRVSVTPISLIGAATDSRDYVPLAKALDKAAKEIGVDFIGGFSALVQKGYQKGDEILINSIPRALAETDKVCSSVNIGSTKTGINMTAVADMGRIIKETAQLSDMGAAKLVVFANAVEDNPFMAGAFHGVGEADVVINVGVSGPGVVKRALEKVRGESFDVVAETVKKTAFKITRIGQLVGQMASECLGVKFGIVDLSLAPTPAVGDSVARVLEEMGLETVGTHGTTAALALLNDQVKKGGVMACNQVGGLSGAFIPVSEDEGMIAAVQNGSLNLEKLEAMTAICSVGLDMIAIPEATPAETIAAMIADEAAIGVINQKTTAVRIIPKGKEGDMIEFGELLGTAPVMKVNQASSAAFIARGGQIPAPIHSFKN.

This sequence belongs to the UPF0210 family. As to quaternary structure, homodimer.

This Streptococcus sanguinis (strain SK36) protein is UPF0210 protein SSA_2018.